The following is a 139-amino-acid chain: D-ribose pyranase (139 aa).

Residue histidine 20 is the Proton donor of the active site. Residues aspartate 28, histidine 106, and 128 to 130 contribute to the substrate site; that span reads YAN.

Belongs to the RbsD / FucU family. RbsD subfamily. Homodecamer.

Its subcellular location is the cytoplasm. It carries out the reaction beta-D-ribopyranose = beta-D-ribofuranose. It participates in carbohydrate metabolism; D-ribose degradation; D-ribose 5-phosphate from beta-D-ribopyranose: step 1/2. Catalyzes the interconversion of beta-pyran and beta-furan forms of D-ribose. The sequence is that of D-ribose pyranase from Actinobacillus pleuropneumoniae serotype 5b (strain L20).